The following is a 334-amino-acid chain: UDP-N-acetylenolpyruvoylglucosamine reductase (334 aa).

The FAD-binding PCMH-type domain maps to 16 to 186 (INVFAKKIII…LSVGIKLPKT (171 aa)). Arginine 162 is an active-site residue. The Proton donor role is filled by serine 232. Residue glutamate 329 is part of the active site.

It belongs to the MurB family. FAD serves as cofactor.

The protein localises to the cytoplasm. It carries out the reaction UDP-N-acetyl-alpha-D-muramate + NADP(+) = UDP-N-acetyl-3-O-(1-carboxyvinyl)-alpha-D-glucosamine + NADPH + H(+). Its pathway is cell wall biogenesis; peptidoglycan biosynthesis. Functionally, cell wall formation. This Buchnera aphidicola subsp. Baizongia pistaciae (strain Bp) protein is UDP-N-acetylenolpyruvoylglucosamine reductase.